A 982-amino-acid polypeptide reads, in one-letter code: Chromosome partition protein Smc (982 aa).

Residue 33–40 coordinates ATP; sequence PNGSGKSN. Coiled coils occupy residues 171–231, 280–310, and 337–377; these read RYTK…ELAV, SADM…VIID, and QTQL…QIEK. Residues 416–535 form the SMC hinge domain; the sequence is TGILNTLGTF…AKDLNSAINL (120 aa). Coiled coils occupy residues 575 to 718 and 753 to 822; these read SASL…SARE and VKLS…IASN.

It belongs to the SMC family. In terms of assembly, homodimer.

It localises to the cytoplasm. In terms of biological role, required for chromosome condensation and partitioning. This is Chromosome partition protein Smc from Mycoplasma genitalium (strain ATCC 33530 / DSM 19775 / NCTC 10195 / G37) (Mycoplasmoides genitalium).